We begin with the raw amino-acid sequence, 210 residues long: Guanylate kinase (210 aa).

One can recognise a Guanylate kinase-like domain in the interval 6-184; it reads GNIYIVVAPS…ARLDLISIVR (179 aa). 13 to 20 is a binding site for ATP; it reads APSGAGKT.

This sequence belongs to the guanylate kinase family.

Its subcellular location is the cytoplasm. The catalysed reaction is GMP + ATP = GDP + ADP. Functionally, essential for recycling GMP and indirectly, cGMP. This Chromobacterium violaceum (strain ATCC 12472 / DSM 30191 / JCM 1249 / CCUG 213 / NBRC 12614 / NCIMB 9131 / NCTC 9757 / MK) protein is Guanylate kinase.